Reading from the N-terminus, the 196-residue chain is Small ribosomal subunit protein uS4c (196 aa).

The 61-residue stretch at 89 to 149 (MRLDNILFRL…DKQRSKALIQ (61 aa)) folds into the S4 RNA-binding domain.

It belongs to the universal ribosomal protein uS4 family. Part of the 30S ribosomal subunit. Contacts protein S5. The interaction surface between S4 and S5 is involved in control of translational fidelity.

Its subcellular location is the plastid. It is found in the chloroplast. In terms of biological role, one of the primary rRNA binding proteins, it binds directly to 16S rRNA where it nucleates assembly of the body of the 30S subunit. Functionally, with S5 and S12 plays an important role in translational accuracy. This is Small ribosomal subunit protein uS4c (rps4) from Asparagus maritimus (Sea asparagus).